A 572-amino-acid polypeptide reads, in one-letter code: Glutamate--tRNA ligase (572 aa).

Positions 107–117 (PNPDGAFHLGN) match the 'HIGH' region motif.

Belongs to the class-I aminoacyl-tRNA synthetase family. Glutamate--tRNA ligase type 2 subfamily.

The protein resides in the cytoplasm. It catalyses the reaction tRNA(Glu) + L-glutamate + ATP = L-glutamyl-tRNA(Glu) + AMP + diphosphate. Catalyzes the attachment of glutamate to tRNA(Glu) in a two-step reaction: glutamate is first activated by ATP to form Glu-AMP and then transferred to the acceptor end of tRNA(Glu). This Pyrococcus furiosus (strain ATCC 43587 / DSM 3638 / JCM 8422 / Vc1) protein is Glutamate--tRNA ligase.